The chain runs to 193 residues: Pilin-like protein PilA2 (193 aa).

Residues 1 to 4 constitute a propeptide, leader sequence; sequence MRKG. L5 bears the N-methylleucine mark. A helical transmembrane segment spans residues 5–25; the sequence is LTLVEVLVTLVIMGIAFAALL.

The protein resides in the cell inner membrane. Its subcellular location is the cell outer membrane. It is found in the periplasm. Functionally, plays an essential role in natural DNA transformation but is not required for pilus biogenesis. The protein is Pilin-like protein PilA2 (pilA2) of Thermus thermophilus (strain ATCC BAA-163 / DSM 7039 / HB27).